A 370-amino-acid polypeptide reads, in one-letter code: Probable endopolygalacturonase A (370 aa).

A signal peptide spans 1–19; the sequence is MPSAKPLFCLATLAGAALA. Residues 20–32 constitute a propeptide that is removed on maturation; it reads APAPSRATDFNKR. Cysteines 35 and 50 form a disulfide. PbH1 repeat units lie at residues 162-192, 193-214, 215-235, 244-265, 273-295, and 307-352; these read SDNLVIEDVTIDNSDGDSEGGHNTDGFDISE, STYITITGATVKNQDDCVAINS, GENIYFSGGTCSGGHGLSIGS, VKNVTFIDSTVSDSENGVRIKT, VEDITYSNIQLSGISDYGIVIEQ, and SNGV…DITG. Residue aspartate 207 is the Proton donor of the active site. A disulfide bond links cysteine 209 and cysteine 225. Residue histidine 229 is part of the active site. Asparagine 246 carries N-linked (GlcNAc...) asparagine glycosylation. Intrachain disulfides connect cysteine 335-cysteine 340 and cysteine 359-cysteine 368.

The protein belongs to the glycosyl hydrolase 28 family.

It localises to the secreted. It carries out the reaction (1,4-alpha-D-galacturonosyl)n+m + H2O = (1,4-alpha-D-galacturonosyl)n + (1,4-alpha-D-galacturonosyl)m.. Functionally, involved in maceration and soft-rotting of plant tissue. Hydrolyzes the 1,4-alpha glycosidic bonds of de-esterified pectate in the smooth region of the plant cell wall. The protein is Probable endopolygalacturonase A (pgaA) of Aspergillus kawachii (strain NBRC 4308) (White koji mold).